Reading from the N-terminus, the 506-residue chain is Trans-cinnamate 4-monooxygenase C4H1 (506 aa).

2 short sequence motifs (nuclear localization signal) span residues 161 to 168 (VKKMPESA) and 247 to 254 (QRRLQLFK). Cys-448 is a binding site for heme.

The protein belongs to the cytochrome P450 family. Requires heme as cofactor.

The protein localises to the nucleus. The catalysed reaction is (E)-cinnamate + reduced [NADPH--hemoprotein reductase] + O2 = (E)-4-coumarate + oxidized [NADPH--hemoprotein reductase] + H2O + H(+). It participates in phenylpropanoid metabolism; trans-4-coumarate biosynthesis; trans-4-coumarate from trans-cinnamate: step 1/1. Its function is as follows. Component of the floral volatile benzenoid/phenylpropanoid (FVBP) biosynthetic pathway that controls carbon flux to pigments essential for pollination or UV protection, to numerous pytoalexins synthesized by plants when challenged by pathogens, and to lignins. The protein is Trans-cinnamate 4-monooxygenase C4H1 of Petunia hybrida (Petunia).